The primary structure comprises 523 residues: Probable malate:quinone oxidoreductase (523 aa).

Belongs to the MQO family. FAD is required as a cofactor.

The catalysed reaction is (S)-malate + a quinone = a quinol + oxaloacetate. Its pathway is carbohydrate metabolism; tricarboxylic acid cycle; oxaloacetate from (S)-malate (quinone route): step 1/1. The chain is Probable malate:quinone oxidoreductase from Agrobacterium fabrum (strain C58 / ATCC 33970) (Agrobacterium tumefaciens (strain C58)).